The chain runs to 500 residues: Probable cytosol aminopeptidase (500 aa).

Mn(2+) contacts are provided by Lys268 and Asp273. Lys280 is a catalytic residue. 3 residues coordinate Mn(2+): Asp291, Asp350, and Glu352. Residue Arg354 is part of the active site.

It belongs to the peptidase M17 family. Mn(2+) serves as cofactor.

Its subcellular location is the cytoplasm. The enzyme catalyses Release of an N-terminal amino acid, Xaa-|-Yaa-, in which Xaa is preferably Leu, but may be other amino acids including Pro although not Arg or Lys, and Yaa may be Pro. Amino acid amides and methyl esters are also readily hydrolyzed, but rates on arylamides are exceedingly low.. It catalyses the reaction Release of an N-terminal amino acid, preferentially leucine, but not glutamic or aspartic acids.. Functionally, presumably involved in the processing and regular turnover of intracellular proteins. Catalyzes the removal of unsubstituted N-terminal amino acids from various peptides. The chain is Probable cytosol aminopeptidase from Baumannia cicadellinicola subsp. Homalodisca coagulata.